The primary structure comprises 332 residues: uncharacterized protein (332 aa).

The signal sequence occupies residues 1-32; that stretch reads MSRDRGARGLRKYGRFALATGAATALSLTASG. Cys33 carries N-palmitoyl cysteine lipidation. Residue Cys33 is the site of S-diacylglycerol cysteine attachment.

It is found in the cell membrane. This is an uncharacterized protein from Streptomyces avermitilis (strain ATCC 31267 / DSM 46492 / JCM 5070 / NBRC 14893 / NCIMB 12804 / NRRL 8165 / MA-4680).